We begin with the raw amino-acid sequence, 302 residues long: Protoheme IX farnesyltransferase (302 aa).

The next 9 helical transmembrane spans lie at 27-47, 48-68, 97-117, 119-139, 148-168, 176-196, 219-239, 240-260, and 280-300; these read VLTL…QSIH, PVLG…AGAL, SALH…GLAL, VLAA…YTIW, IVIG…AATG, LLFA…ALFI, IQIM…WAMG, LTGA…LLLA, and LFGF…ADKV.

Belongs to the UbiA prenyltransferase family. Protoheme IX farnesyltransferase subfamily.

The protein localises to the cell inner membrane. It carries out the reaction heme b + (2E,6E)-farnesyl diphosphate + H2O = Fe(II)-heme o + diphosphate. It participates in porphyrin-containing compound metabolism; heme O biosynthesis; heme O from protoheme: step 1/1. Its function is as follows. Converts heme B (protoheme IX) to heme O by substitution of the vinyl group on carbon 2 of heme B porphyrin ring with a hydroxyethyl farnesyl side group. The sequence is that of Protoheme IX farnesyltransferase from Rhizorhabdus wittichii (strain DSM 6014 / CCUG 31198 / JCM 15750 / NBRC 105917 / EY 4224 / RW1) (Sphingomonas wittichii).